Reading from the N-terminus, the 476-residue chain is Calcium/calmodulin-dependent protein kinase type 1G (476 aa).

A Protein kinase domain is found at 23–277; that stretch reads FIFMEVLGSG…CEKALSHPWI (255 aa). ATP-binding positions include 29–37 and Lys52; that span reads LGSGAFSEV. The active-site Proton acceptor is the Asp143. Residues 277–317 are autoinhibitory domain; sequence IDGNTALHRDIYPSVSLQIQKNFAKSKWRQAFNAAAVVHHM. Residues 297-318 are calmodulin-binding; it reads KNFAKSKWRQAFNAAAVVHHMR. The tract at residues 325 to 352 is disordered; the sequence is HSPGVRPEVENRPPETQASETSRPSSPE. Residues 338–352 are compositionally biased toward polar residues; sequence PETQASETSRPSSPE.

This sequence belongs to the protein kinase superfamily. CAMK Ser/Thr protein kinase family. CaMK subfamily. In terms of processing, may be prenylated on Cys-473. Mainly expressed in brain with small amounts in skeletal muscles, kidney, spleen and liver. Strongly expressed in forebrain neocortex, striatum and limbic system.

The protein resides in the cytoplasm. Its subcellular location is the golgi apparatus membrane. It localises to the cell membrane. The enzyme catalyses L-seryl-[protein] + ATP = O-phospho-L-seryl-[protein] + ADP + H(+). It catalyses the reaction L-threonyl-[protein] + ATP = O-phospho-L-threonyl-[protein] + ADP + H(+). With respect to regulation, activated by Ca(2+)/calmodulin. Binding of calmodulin is thought to result in a conformational change and leads to activation through phosphorylation by CAMKK1. Functionally, calcium/calmodulin-dependent protein kinase belonging to a proposed calcium-triggered signaling cascade. In vitro phosphorylates transcription factor CREB1. The sequence is that of Calcium/calmodulin-dependent protein kinase type 1G (CAMK1G) from Homo sapiens (Human).